The sequence spans 709 residues: Protein white (709 aa).

Residues 1–35 (MTINTDDQYADGESKTTISSNRRYSTSSFQDQSME) are disordered. The span at 15 to 32 (KTTISSNRRYSTSSFQDQ) shows a compositional bias: polar residues. In terms of domain architecture, ABC transporter spans 103 to 348 (FTRQRLVKDF…SQLGIPCPPN (246 aa)). ATP-binding positions include 136–143 (GSSGAGKT) and 292–299 (GMAMKGKT). The helical transmembrane segment at 457–475 (LLQTAMVASLIGSIYFGQV) threads the bilayer. N-linked (GlcNAc...) asparagine glycosylation occurs at asparagine 485. 4 helical membrane-spanning segments follow: residues 487 to 507 (SLFL…INVF), 537 to 555 (LPLF…YPMI), 564 to 585 (YLTT…GYLI), and 598 to 616 (VGPP…FLNS). An N-linked (GlcNAc...) asparagine glycan is attached at asparagine 658. The helical transmembrane segment at 681 to 700 (LDIGCLFALIVLFRLGALFC) threads the bilayer.

Belongs to the ABC transporter superfamily. ABCG family. Eye pigment precursor importer (TC 3.A.1.204) subfamily.

It is found in the membrane. In terms of biological role, may be part of a membrane-spanning permease system necessary for the transport of pigment precursors into pigment cells responsible for eye color. The polypeptide is Protein white (W) (Anopheles albimanus (New world malaria mosquito)).